The chain runs to 1217 residues: Inactive disease resistance protein RPS4 (1217 aa).

The 162-residue stretch at 14–175 (PQHQVFINFR…EIVKAVKTAL (162 aa)) folds into the TIR domain. Glu88 is an active-site residue. In terms of domain architecture, NB-ARC spans 211–472 (EQRLKDLEEK…FRSQDKDYVE (262 aa)). LRR repeat units lie at residues 260–285 (HALI…LLGE), 436–459 (PNIV…AFLD), 614–636 (LKEV…DFNP), 637–659 (INLV…DKDT), 682–706 (AEKL…MKKM), 708–728 (MLAF…EMNL), 729–749 (ISLK…PLIS), 750–774 (DNIE…KLQR), 796–818 (LKAL…EIDI), 819–842 (SFLN…SVQY), and 861–887 (LSQL…NLQC). Positions 1162-1195 (TEGVDGRVKKKKKTRMDNGRPKKKQRSGRDDNQT) are disordered. A Nuclear localization signal motif is present at residues 1170–1177 (KKKKKTRM).

As to quaternary structure, interacts with EDS1.

It is found in the nucleus. It carries out the reaction NAD(+) + H2O = ADP-D-ribose + nicotinamide + H(+). The sequence is that of Inactive disease resistance protein RPS4 (RPS4) from Arabidopsis thaliana (Mouse-ear cress).